Here is a 586-residue protein sequence, read N- to C-terminus: ATPase family AAA domain-containing protein 3A (586 aa).

Disordered stretches follow at residues 1–55 and 111–134; these read MSWL…PTGL and QAEE…QYQD. Ser-2 carries the N-acetylserine modification. The required for interaction with the inner surface of the mitochondrial outer membrane stretch occupies residues 2–50; that stretch reads SWLFGINKGPKGEGAGPPPPLPPAQPGAEGGGDRGLGDRPAPKDKWSNF. The Mitochondrial intermembrane segment spans residues 2–246; the sequence is SWLFGINKGP…FRAFVTDWDK (245 aa). Over residues 17–26 the composition is skewed to pro residues; sequence GPPPPLPPAQ. Composition is skewed to basic and acidic residues over residues 32–48 and 111–125; these read GGDR…DKWS and QAEE…ETRQ. Residues 86 to 219 adopt a coiled-coil conformation; the sequence is QLEQQSKLKE…QIRLKAAEHR (134 aa). Residues 247–264 form a helical membrane-spanning segment; the sequence is VTATVAGLTLLAVGVYSA. Residues 265–586 are Mitochondrial matrix-facing; sequence KNATLVAGRF…PGRGDEPSPS (322 aa). Residues 290–305 form an S100B-binding region; sequence RITVLEALRHPIQVSR. Ser-321 carries the phosphoserine modification. 352 to 359 contributes to the ATP binding site; the sequence is GPPGTGKT. Lys-491 carries the post-translational modification N6-acetyllysine.

Belongs to the AAA ATPase family. Can form homooligomers. Homodimer formation at the N-terminus may be regulated by ATP and is required for the interaction with the inner surface of the mitochondrial outer membrane and correct mitochondrial homeostasis. Interacts with components of the mitochondrial ribosome and with other proteins involved in mitochondrial RNA metabolism. May also interact with protein involved in lipid metabolism, including STARD9. May interact with FAM210A. Interacts with GADD45GIP1. Interacts with S100B in a Ca(+2)- and Zn(+2)-dependent manner; this interaction probably occurs in the cytosol prior to mitochondrial targeting. S100B could assist ATAD3A cytoplasmic processing, preventing aggregation and favoring mitochondrial localization. Interacts with HSP60/HSPD1. Forms heterooligomers with ATAD3B; this interaction may affect ATAD3A activity. Interacts with CLPB. Interacts with EIF2AK3/PERK; ATAD3A and EIF2S1/eIF-2-alpha occupy a common binding site within the cytoplasmic loop of EIF2AK3/PERK, leading to prevent EIF2AK3/PERK association with its substrate EIF2S1/eIF-2-alpha. As to expression, overexpressed in lung adenocarcinomas (at protein level).

The protein resides in the mitochondrion inner membrane. It localises to the mitochondrion matrix. Its subcellular location is the mitochondrion nucleoid. It carries out the reaction ATP + H2O = ADP + phosphate + H(+). Its function is as follows. Essential for mitochondrial network organization, mitochondrial metabolism and cell growth at organism and cellular level. May play an important role in mitochondrial protein synthesis. May also participate in mitochondrial DNA replication. May bind to mitochondrial DNA D-loops and contribute to nucleoid stability. Required for enhanced channeling of cholesterol for hormone-dependent steroidogenesis. Involved in mitochondrial-mediated antiviral innate immunity. Required to protect mitochondria from the PERK-mediated unfolded protein response: specifically inhibits the activity of EIF2AK3/PERK at mitochondria-endoplasmic reticulum contact sites, thereby providing a safe haven for mitochondrial protein translation during endoplasmic reticulum stress. Ability to inhibit EIF2AK3/PERK is independent of its ATPase activity. Also involved in the mitochondrial DNA damage response by promoting signaling between damaged genomes and the mitochondrial membrane, leading to activation of the integrated stress response (ISR). The sequence is that of ATPase family AAA domain-containing protein 3A from Homo sapiens (Human).